The sequence spans 396 residues: 1-deoxy-D-xylulose 5-phosphate reductoisomerase (396 aa).

NADPH-binding residues include Thr13, Gly14, Ser15, Ile16, and Asn127. Residue Lys128 coordinates 1-deoxy-D-xylulose 5-phosphate. Glu129 contributes to the NADPH binding site. Asp153 lines the Mn(2+) pocket. Positions 154, 155, 184, and 207 each coordinate 1-deoxy-D-xylulose 5-phosphate. Glu155 contacts Mn(2+). Gly213 serves as a coordination point for NADPH. 4 residues coordinate 1-deoxy-D-xylulose 5-phosphate: Ser220, Asn225, Lys226, and Glu229. Glu229 is a binding site for Mn(2+).

It belongs to the DXR family. Requires Mg(2+) as cofactor. Mn(2+) is required as a cofactor.

It carries out the reaction 2-C-methyl-D-erythritol 4-phosphate + NADP(+) = 1-deoxy-D-xylulose 5-phosphate + NADPH + H(+). Its pathway is isoprenoid biosynthesis; isopentenyl diphosphate biosynthesis via DXP pathway; isopentenyl diphosphate from 1-deoxy-D-xylulose 5-phosphate: step 1/6. Functionally, catalyzes the NADPH-dependent rearrangement and reduction of 1-deoxy-D-xylulose-5-phosphate (DXP) to 2-C-methyl-D-erythritol 4-phosphate (MEP). The sequence is that of 1-deoxy-D-xylulose 5-phosphate reductoisomerase from Pseudomonas putida (strain W619).